We begin with the raw amino-acid sequence, 451 residues long: Protein naked cuticle homolog 2 (451 aa).

Residues 1–108 (MGKLQSKHAA…PRGPGGQRLN (108 aa)) are disordered. A lipid anchor (N-myristoyl glycine) is attached at Gly-2. Residues 2 to 173 (GKLQSKHAAA…GSSKTLRVKL (172 aa)) are targeting to the basolateral cell membrane. Basic and acidic residues-rich tracts occupy residues 34–63 (KGAE…REDQ) and 89–99 (DGERAANREGP). Residues 113 to 178 (QCDVSVEEDD…LRVKLTVSPE (66 aa)) are interaction with DVL1, DVL2 and DVL3. Residues 119-154 (EEDDRQEWTFTLYDFDNCGKVTREDMSSLMHTIYEV) form the EF-hand domain. Asp-132, Asp-134, Lys-138, and Asp-143 together coordinate Ca(2+). Disordered stretches follow at residues 162 to 237 (SSGS…PYCV) and 256 to 408 (YTSR…TVEH). Residues 180-215 (SSKRKEGPPAGQDREPTRCRMEGELAEEPRVADRRL) are compositionally biased toward basic and acidic residues. The interval 300–385 (QVLVEHVVPA…PPPPYGHKRY (86 aa)) is interaction with TGFA. The span at 332–351 (KSPKGSGKPPGVPASSKSGK) shows a compositional bias: low complexity.

It belongs to the NKD family. In terms of assembly, interacts with DVL1, DVL2, DVL3 and PPP2R3A. Interacts with RNF25 and TGFA (via cytoplasmic domain). In terms of processing, ubiquitinated, leading to rapid proteasomal degradation. Interaction with TGFA interferes with RNF25 binding and protects against ubiquitination mediated by RNF25. As to expression, expressed in kidney, lung, pancreas and spleen.

It localises to the cell membrane. Its subcellular location is the cytoplasm. The protein localises to the cytoplasmic vesicle. Functionally, cell autonomous antagonist of the canonical Wnt signaling pathway. May activate a second Wnt signaling pathway that controls planar cell polarity. Required for processing of TGFA and for targeting of TGFA to the basolateral membrane of polarized epithelial cells. In Homo sapiens (Human), this protein is Protein naked cuticle homolog 2 (NKD2).